The chain runs to 438 residues: GTPase Der (438 aa).

EngA-type G domains are found at residues 4–168 (PIVA…PKGY) and 177–352 (IRIA…TNYS). GTP-binding positions include 10-17 (GRPNVGKS), 57-61 (DTGGI), 120-123 (NKID), 183-190 (GKPNVGKS), 230-234 (DTAGL), and 295-298 (NKWD). One can recognise a KH-like domain in the interval 353-437 (KRISTGVLND…GIKMEFRERK (85 aa)).

It belongs to the TRAFAC class TrmE-Era-EngA-EngB-Septin-like GTPase superfamily. EngA (Der) GTPase family. In terms of assembly, associates with the 50S ribosomal subunit.

GTPase that plays an essential role in the late steps of ribosome biogenesis. This is GTPase Der from Clostridium tetani (strain Massachusetts / E88).